A 407-amino-acid chain; its full sequence is tRNA N6-adenosine threonylcarbamoyltransferase, mitochondrial (407 aa).

The N-terminal 30 residues, 1–30 (MISIKGTGRFLLDNYRIWQRRAFNRPIQLR), are a transit peptide targeting the mitochondrion. Positions 145 and 149 each coordinate a divalent metal cation. Residues 170-174 (LVSGG), Asp203, Ala217, Glu221, 328-329 (SN), and Ser360 each bind substrate. An a divalent metal cation-binding site is contributed by Asp361.

Belongs to the KAE1 / TsaD family. In terms of assembly, homodimer. The cofactor is a divalent metal cation.

It localises to the mitochondrion. The enzyme catalyses L-threonylcarbamoyladenylate + adenosine(37) in tRNA = N(6)-L-threonylcarbamoyladenosine(37) in tRNA + AMP + H(+). Required for the formation of a threonylcarbamoyl group on adenosine at position 37 (t(6)A37) in mitochondrial tRNAs that read codons beginning with adenine. Probably involved in the transfer of the threonylcarbamoyl moiety of threonylcarbamoyl-AMP (TC-AMP) to the N6 group of A37. Involved in mitochondrial genome maintenance. The protein is tRNA N6-adenosine threonylcarbamoyltransferase, mitochondrial (QRI7) of Saccharomyces cerevisiae (strain ATCC 204508 / S288c) (Baker's yeast).